Reading from the N-terminus, the 307-residue chain is B3 domain-containing protein At5g18000 (307 aa).

Residues 20 to 115 constitute a DNA-binding region (TF-B3 1); that stretch reads FFKILRREDH…CFNVTIFEAD (96 aa). Disordered regions lie at residues 122–141 and 151–209; these read PRKT…RKSI and IESW…SEAG. Residues 166–177 are compositionally biased toward polar residues; sequence ESTSGRLTQKQE. The span at 178 to 192 shows a compositional bias: basic and acidic residues; the sequence is LNLRKKEADKTEKSK. Positions 214-307 form a DNA-binding region, TF-B3 2; the sequence is IPEFKLTIKK…TEMRVKVSKE (94 aa).

Its subcellular location is the nucleus. This is B3 domain-containing protein At5g18000 from Arabidopsis thaliana (Mouse-ear cress).